Reading from the N-terminus, the 194-residue chain is Ferredoxin, apicoplast (194 aa).

The N-terminal 19 residues, 1-19, are a transit peptide targeting the apicoplast; sequence MNIVILLLILTFSIKHSNT. Residues 99 to 189 enclose the 2Fe-2S ferredoxin-type domain; the sequence is YNITLRTNDG…DCVIETHKED (91 aa). [2Fe-2S] cluster contacts are provided by cysteine 135, cysteine 140, cysteine 143, and cysteine 173.

It belongs to the 2Fe2S plant-type ferredoxin family. It depends on [2Fe-2S] cluster as a cofactor.

It is found in the plastid. The protein localises to the apicoplast. Functionally, ferredoxins are iron-sulfur proteins that transfer electrons in a wide variety of metabolic reactions. By transferring electrons to 4-hydroxy-3-methylbut-2-enyl diphosphate reductase LytB/IspH, plays a role in the terminal step of the DOXP/MEP pathway for isoprenoid precursor biosynthesis. The protein is Ferredoxin, apicoplast of Plasmodium falciparum (isolate 3D7).